The primary structure comprises 231 residues: Large ribosomal subunit protein uL1 (231 aa).

It belongs to the universal ribosomal protein uL1 family. As to quaternary structure, part of the 50S ribosomal subunit.

Binds directly to 23S rRNA. The L1 stalk is quite mobile in the ribosome, and is involved in E site tRNA release. In terms of biological role, protein L1 is also a translational repressor protein, it controls the translation of the L11 operon by binding to its mRNA. The chain is Large ribosomal subunit protein uL1 from Legionella pneumophila (strain Paris).